Consider the following 485-residue polypeptide: FAD-dependent monooxygenase elcH (485 aa).

A signal peptide spans 1 to 19 (MFTLRSLAILAVFAATALA). FAD contacts are provided by D59 and G73. N-linked (GlcNAc...) asparagine glycans are attached at residues N126, N147, and N157.

This sequence belongs to the paxM FAD-dependent monooxygenase family. Requires FAD as cofactor.

Its pathway is secondary metabolite biosynthesis. FAD-dependent monooxygenase; part of the gene cluster that mediates the biosynthesis of elsinochrome C, a perelyenequinone phytotoxin structurally similar to cercosporin. The first step of elsinochrome C biosynthesis is performed by the polyketide synthase elcA which catalyzes the formation of nor-toralactone. The starter unit acyltransferase (SAT) domain of elcA initiates polyketide extension by the selective utilization of acetyl-CoA, which is elongated to the heptaketide in the beta-ketoacyl synthase (KS) domain by successive condensations with six malonyl units introduced by the malonyl acyltransferase (MAT) domain. The product template (PT) domain catalyzes C4-C9 and C2-C11 aldol cyclizations and dehydrations to a trihydroxynaphthalene, which is thought to be delivered to the thioesterase (TE) domain for product release. The bifunctional enzyme elcB then methylates nor-toralactone to toralactone before conducting an unusual oxidative aromatic ring opening. The next step in perylenequinone biosynthesis is an O-methylation at the nascent OH-6 of the elcB product performed by the O-methyltransferase elcD. The oxidative coupling of the two monomeric naphthol units in perylenequinone biosynthesis is catalyzed by the FAD-dependent monooxygenase elcE and the multicopper oxidase elcG. ElcG might catalyze the first intermolecular coupling in a regio- and stereo-selective manner via a phenol radical coupling mechanism and the elcE could forge the second C-C bond intramolecularly via a hydride transfer mechanism. The fasciclin domain-containing protein elcF might also play a role duting this step. The last piece of the puzzle in the biosynthesis of elsinochrome C is the additional annulation by enolate coupling to afford the dihydrobenzo(ghi)perylenequinone system, catalyzed by the FAD-dependent monooxygenase elcH. This is FAD-dependent monooxygenase elcH from Phaeosphaeria nodorum (strain SN15 / ATCC MYA-4574 / FGSC 10173) (Glume blotch fungus).